A 694-amino-acid polypeptide reads, in one-letter code: Probable metal-nicotianamine transporter YSL8 (694 aa).

The next 14 membrane-spanning stretches (helical) occupy residues 38 to 58 (ITVRSLVVSAVLGTFLSFIVM), 62 to 82 (LTSGIVPSLNVSAGLLAFFLM), 110 to 130 (CVISCSSIAFSGGFGTYILGM), 154 to 174 (LGRLIAFLFLVSFVGLFSIVP), 215 to 235 (ILFKSFVGSFLWSLFQWFYAA), 265 to 285 (VGVGMICPYIINFSLLIGSVV), 319 to 339 (VFISIAMIVGDGLFNFFSIVL), 393 to 413 (IAAAAYVLLAAISVVAIPHIF), 421 to 441 (VVWAYVVAPLFAFCNAYGTGL), 467 to 487 (GGVVAGLAACGLMMGIVSTAS), 506 to 526 (MFVSQVLGTGMGCIISPMVFW), 567 to 587 (LRFCLAFFLLAIAICALKEVA), 608 to 628 (FFLGSFFTIDMCVGSLVLFLW), and 643 to 663 (VASGLICGDGIWSLPSSILSL).

This sequence belongs to the YSL (TC 2.A.67.2) family. As to expression, expressed in root epidermis and exoderm.

The protein localises to the membrane. May be involved in the transport of nicotianamine-chelated metals. This is Probable metal-nicotianamine transporter YSL8 (YSL8) from Oryza sativa subsp. japonica (Rice).